A 405-amino-acid chain; its full sequence is Dematin (405 aa).

3 disordered regions span residues 1–29, 81–100, and 108–332; these read MERLQKQPLTSPGSVSSSRDSSVPGSPSS, SRECSLSPKSTSPPPSPEVW, and IISQ…DRGN. Low complexity predominate over residues 11–29; that stretch reads SPGSVSSSRDSSVPGSPSS. Residues serine 16, serine 18, serine 26, serine 92, serine 96, serine 110, and serine 113 each carry the phosphoserine modification. Residues 113 to 124 are compositionally biased toward low complexity; that stretch reads STPRTTGTPRTS. A Phosphothreonine modification is found at threonine 114. Phosphoserine occurs at positions 156 and 226. Acidic residues predominate over residues 216-228; that stretch reads EEEEEEEDDDSEE. Residues 224 to 308 form an interaction with RASGRF2 region; that stretch reads DDSEEEIKAI…SRLQSTEFSP (85 aa). Composition is skewed to basic and acidic residues over residues 229 to 242 and 252 to 261; these read EIKAIRERQKEELS and ILKEEMEKSL. Phosphoserine occurs at positions 269, 279, 289, 303, 315, 333, 372, and 383. Low complexity predominate over residues 277-292; it reads HTSLHSGTSKSSSLPS. Over residues 294-322 the composition is skewed to polar residues; the sequence is GRTTLSRLQSTEFSPSGSEAGSPGLQNGE. One can recognise an HP domain in the interval 337 to 405; the sequence is VLEQKIYPYE…NELKKKASLF (69 aa). The residue at position 403 (serine 403) is a Phosphoserine; by PKA.

Belongs to the villin/gelsolin family. Monomeric (isoform 2); under reducing conditions. Self-associates. Exists under oxidizing condition as a trimer of two isoforms 2 and isoform 1 linked by disulfide bonds. Found in a complex with DMTN, F-actin and spectrin. Found in a complex with ADD2, DMTN and SLC2A1. Interacts with F-actin, ITPKB and spectrin. Isoform 2 interacts with SLC2A1 (via C-terminus cytoplasmic region). Interacts with RASGRF2. In terms of processing, phosphorylated. Phosphorylation at Ser-403 by PKA causes the C-terminal headpiece domain to associate with the N-terminal core domain, and leads to the inhibition of its actin bundling activity. As to expression, expressed in platelets. Isoform 1 and isoform 2 are expressed in mature erythrocytes (at protein level).

The protein localises to the cytoplasm. It localises to the cytosol. Its subcellular location is the perinuclear region. The protein resides in the cytoskeleton. It is found in the cell membrane. The protein localises to the membrane. It localises to the endomembrane system. Its subcellular location is the cell projection. In terms of biological role, membrane-cytoskeleton-associated protein with F-actin-binding activity that induces F-actin bundles formation and stabilization. Its F-actin-bundling activity is reversibly regulated upon its phosphorylation by the cAMP-dependent protein kinase A (PKA). Binds to the erythrocyte membrane glucose transporter-1 SLC2A1/GLUT1, and hence stabilizes and attaches the spectrin-actin network to the erythrocytic plasma membrane. Plays a role in maintaining the functional integrity of PKA-activated erythrocyte shape and the membrane mechanical properties. Also plays a role as a modulator of actin dynamics in fibroblasts; acts as a negative regulator of the RhoA activation pathway. In platelets, functions as a regulator of internal calcium mobilization across the dense tubular system that affects platelet granule secretion pathways and aggregation. Also required for the formation of a diverse set of cell protrusions, such as filopodia and lamellipodia, necessary for platelet cell spreading, motility and migration. Acts as a tumor suppressor and inhibits malignant cell transformation. The protein is Dematin (Dmtn) of Mus musculus (Mouse).